The chain runs to 391 residues: MVTVDEVRKAQRAEGPATILAIGTATPPNCVDQSTYPDYYFRITKSEHKTELKEKFQRMCDKSMIKKRYMYLTEEILKENPSMCEYMAPSLDARQDMVVVEIPKLGKEAATKAIKEWGQPKSKITHLVFCTTSGVDMPGADYQLTKLLGLRPSVKRLMMYQQGCFAGGTVLRLAKDLAENNKGARVLVVCSEITAVTFRGPSDTHLDSLVGQALFGDGAAAIIVGSDPLPDIERPLFELVSAAQTILPDSDGAIDGHLREVGLTFHLLKDVPGLISKNIEKSLNEAFKPLDITDWNSLFWIAHPGGPAILDQVEAKLGLKPEKLEATRNILSEYGNMSSACVLFILDEVRRKSVANGHKTTGEGLEWGVLFGFGPGLTVETVVLHSVAAST.

Cysteine 164 is a catalytic residue.

Belongs to the thiolase-like superfamily. Chalcone/stilbene synthases family. Homodimer. Expressed in fruits.

It carries out the reaction (E)-4-coumaroyl-CoA + 3 malonyl-CoA + 3 H(+) = 2',4,4',6'-tetrahydroxychalcone + 3 CO2 + 4 CoA. It participates in secondary metabolite biosynthesis; flavonoid biosynthesis. In terms of biological role, polyketide synthase producing naringenin chalcone and slightly p-coumaryltriacetic acid lactone (CTAL). Can use p-coumaryl-CoA as substrate. The polypeptide is Polyketide synthase 1 (PKS1) (Rubus idaeus (Raspberry)).